We begin with the raw amino-acid sequence, 366 residues long: sn-glycerol-3-phosphate import ATP-binding protein UgpC (366 aa).

In terms of domain architecture, ABC transporter spans 4–235 (VTLRNVRKTY…PASTFVASFI (232 aa)). 37-44 (GPSGCGKS) contacts ATP.

The protein belongs to the ABC transporter superfamily. sn-glycerol-3-phosphate importer (TC 3.A.1.1.3) family. The complex is composed of two ATP-binding proteins (UgpC), two transmembrane proteins (UgpA and UgpE) and a solute-binding protein (UgpB).

Its subcellular location is the cell inner membrane. It carries out the reaction sn-glycerol 3-phosphate(out) + ATP + H2O = sn-glycerol 3-phosphate(in) + ADP + phosphate + H(+). In terms of biological role, part of the ABC transporter complex UgpBAEC involved in sn-glycerol-3-phosphate (G3P) import. Responsible for energy coupling to the transport system. This is sn-glycerol-3-phosphate import ATP-binding protein UgpC from Rhodopseudomonas palustris (strain BisB18).